Here is a 348-residue protein sequence, read N- to C-terminus: Phenylalanine--tRNA ligase alpha subunit (348 aa).

A Mg(2+)-binding site is contributed by Glu-262.

The protein belongs to the class-II aminoacyl-tRNA synthetase family. Phe-tRNA synthetase alpha subunit type 1 subfamily. Tetramer of two alpha and two beta subunits. Requires Mg(2+) as cofactor.

It localises to the cytoplasm. It carries out the reaction tRNA(Phe) + L-phenylalanine + ATP = L-phenylalanyl-tRNA(Phe) + AMP + diphosphate + H(+). This is Phenylalanine--tRNA ligase alpha subunit from Streptococcus pneumoniae (strain 70585).